The chain runs to 660 residues: uncharacterized protein (660 aa).

The tract at residues 220–239 (ADARGQAAAPPQAQAPAPPD) is disordered. Residues 222–239 (ARGQAAAPPQAQAPAPPD) are compositionally biased toward low complexity.

This is an uncharacterized protein from Callospermophilus lateralis (Golden-mantled ground squirrel).